The primary structure comprises 224 residues: MSESRIDFRKAEFLISAPDIAHLNEYLPGDVGVEIAFAGRSNAGKSSALNLLTEQKIARTSKTPGRTQLINVFKLDKHRRLVDLPGYGFAQVPLALKKKWQQALGEYLLKRECLSGVVVLMDIRHPLKDLDMQMIEWAVESDIPVLALLTKADKLGQSARMKMVNEVRKKLSNFDDAVKVEAFSSLKGIGKGKVLGILDQWCKPEWLQEQLTAESIEAQIESGK.

Positions 31–204 constitute an EngB-type G domain; that stretch reads VGVEIAFAGR…LGILDQWCKP (174 aa). GTP-binding positions include 39-46, 65-69, 83-86, 150-153, and 183-185; these read GRSNAGKS, GRTQL, DLPG, TKAD, and FSS. The Mg(2+) site is built by Ser-46 and Thr-67.

It belongs to the TRAFAC class TrmE-Era-EngA-EngB-Septin-like GTPase superfamily. EngB GTPase family. Mg(2+) is required as a cofactor.

Necessary for normal cell division and for the maintenance of normal septation. This chain is Probable GTP-binding protein EngB, found in Shewanella piezotolerans (strain WP3 / JCM 13877).